The following is a 367-amino-acid chain: uncharacterized protein (367 aa).

It localises to the mitochondrion. This is an uncharacterized protein from Paramecium tetraurelia.